The following is a 156-amino-acid chain: 6,7-dimethyl-8-ribityllumazine synthase (156 aa).

Residues Phe22, 57-59 (AYE), and 81-83 (TVI) contribute to the 5-amino-6-(D-ribitylamino)uracil site. 86–87 (GT) is a (2S)-2-hydroxy-3-oxobutyl phosphate binding site. His89 acts as the Proton donor in catalysis. Phe114 is a 5-amino-6-(D-ribitylamino)uracil binding site. Arg128 provides a ligand contact to (2S)-2-hydroxy-3-oxobutyl phosphate.

The protein belongs to the DMRL synthase family. Forms an icosahedral capsid composed of 60 subunits, arranged as a dodecamer of pentamers.

It carries out the reaction (2S)-2-hydroxy-3-oxobutyl phosphate + 5-amino-6-(D-ribitylamino)uracil = 6,7-dimethyl-8-(1-D-ribityl)lumazine + phosphate + 2 H2O + H(+). Its pathway is cofactor biosynthesis; riboflavin biosynthesis; riboflavin from 2-hydroxy-3-oxobutyl phosphate and 5-amino-6-(D-ribitylamino)uracil: step 1/2. Its function is as follows. Catalyzes the formation of 6,7-dimethyl-8-ribityllumazine by condensation of 5-amino-6-(D-ribitylamino)uracil with 3,4-dihydroxy-2-butanone 4-phosphate. This is the penultimate step in the biosynthesis of riboflavin. This Serratia proteamaculans (strain 568) protein is 6,7-dimethyl-8-ribityllumazine synthase.